The following is a 160-amino-acid chain: Cytochrome b6-f complex subunit 4 (160 aa).

3 consecutive transmembrane segments (helical) span residues 36 to 56 (LLYTFPVVILGTITCCIGLAL), 95 to 115 (LLGVLSMASVPLGLIFVPFIE), and 127 to 147 (PIATTVFLVGTVVTIWLGIGA).

It belongs to the cytochrome b family. PetD subfamily. As to quaternary structure, the 4 large subunits of the cytochrome b6-f complex are cytochrome b6, subunit IV (17 kDa polypeptide, petD), cytochrome f and the Rieske protein, while the 4 small subunits are petG, petL, petM and petN. The complex functions as a dimer.

It is found in the plastid. The protein localises to the chloroplast thylakoid membrane. Its function is as follows. Component of the cytochrome b6-f complex, which mediates electron transfer between photosystem II (PSII) and photosystem I (PSI), cyclic electron flow around PSI, and state transitions. The polypeptide is Cytochrome b6-f complex subunit 4 (Cyanidioschyzon merolae (strain NIES-3377 / 10D) (Unicellular red alga)).